Reading from the N-terminus, the 119-residue chain is T cell receptor alpha variable 29/delta variable 5 (119 aa).

An N-terminal signal peptide occupies residues 1–21 (MAMLLGASVLILWLQPDWVNS). One can recognise an Ig-like domain in the interval 22–119 (QQKNDDQQVK…DSAVYFCAAS (98 aa)). A disulfide bridge links C49 with C116. N93 carries N-linked (GlcNAc...) asparagine glycosylation.

In terms of assembly, alpha-beta TR is a heterodimer composed of an alpha and beta chain; disulfide-linked. The alpha-beta TR is associated with the transmembrane signaling CD3 coreceptor proteins to form the TR-CD3 (TcR or TCR). The assembly of alpha-beta TR heterodimers with CD3 occurs in the endoplasmic reticulum where a single alpha-beta TR heterodimer associates with one CD3D-CD3E heterodimer, one CD3G-CD3E heterodimer and one CD247 homodimer forming a stable octameric structure. CD3D-CD3E and CD3G-CD3E heterodimers preferentially associate with TR alpha and TR beta chains, respectively. The association of the CD247 homodimer is the last step of TcR assembly in the endoplasmic reticulum and is required for transport to the cell surface.

Its subcellular location is the cell membrane. V region of the variable domain of T cell receptor (TR) alpha chain that participates in the antigen recognition. Alpha-beta T cell receptors are antigen specific receptors which are essential to the immune response and are present on the cell surface of T lymphocytes. Recognize peptide-major histocompatibility (MH) (pMH) complexes that are displayed by antigen presenting cells (APC), a prerequisite for efficient T cell adaptive immunity against pathogens. Binding of alpha-beta TR to pMH complex initiates TR-CD3 clustering on the cell surface and intracellular activation of LCK that phosphorylates the ITAM motifs of CD3G, CD3D, CD3E and CD247 enabling the recruitment of ZAP70. In turn ZAP70 phosphorylates LAT, which recruits numerous signaling molecules to form the LAT signalosome. The LAT signalosome propagates signal branching to three major signaling pathways, the calcium, the mitogen-activated protein kinase (MAPK) kinase and the nuclear factor NF-kappa-B (NF-kB) pathways, leading to the mobilization of transcription factors that are critical for gene expression and essential for T cell growth and differentiation. The T cell repertoire is generated in the thymus, by V-(D)-J rearrangement. This repertoire is then shaped by intrathymic selection events to generate a peripheral T cell pool of self-MH restricted, non-autoaggressive T cells. Post-thymic interaction of alpha-beta TR with the pMH complexes shapes TR structural and functional avidity. This is T cell receptor alpha variable 29/delta variable 5 from Homo sapiens (Human).